The following is a 142-amino-acid chain: Rhinocerosin (142 aa).

Positions 1-16 (MMKLYIVFGFIAFSAA) are cleaved as a signal peptide. Residues 17–70 (YVVPEGYYEPEYYPADGYESERVARASPAELIFDEDLADEPEVEEPQYYIRTRR) constitute a propeptide that is removed on maturation. The tract at residues 72-96 (LQPGAPNFPMPGSQLPTSITSNIEK) is disordered. Polar residues predominate over residues 85 to 96 (QLPTSITSNIEK).

Belongs to the coleoptericin family. As to expression, strongly expressed in the fat body and the Malpighian tubules, and weakly expressed in hemocytes and midgut.

It is found in the secreted. In terms of biological role, has strong antibacterial activity against E.coli, Streptococcus pyogenes, Staphylococcus aureus but not against Pseudomonas aeruginosa. The sequence is that of Rhinocerosin from Oryctes rhinoceros (Coconut rhinoceros beetle).